A 387-amino-acid polypeptide reads, in one-letter code: Chaperone protein DnaJ (387 aa).

Positions 4–68 constitute a J domain; it reads DFYDVLGVSR…EKRQMYDQLG (65 aa). Residues 76–135 form a disordered region; that stretch reads EKRGGVGGGGNSSGGSARGDPFGGMGGQGSPFGDIFEQFFGGGQGQRRQGNRPRQGQNLQ. Positions 80 to 105 are enriched in gly residues; sequence GVGGGGNSSGGSARGDPFGGMGGQGS. Low complexity predominate over residues 121-133; sequence QRRQGNRPRQGQN. The segment at 148 to 230 adopts a CR-type zinc-finger fold; sequence GVEKQFTVRR…CNGDGVTRQE (83 aa). Cys161, Cys164, Cys178, Cys181, Cys204, Cys207, Cys218, and Cys221 together coordinate Zn(2+). CXXCXGXG motif repeat units lie at residues 161–168, 178–185, 204–211, and 218–225; these read CPDCNGRG, CPQCNGQG, CPRCDGSG, and CSTCNGDG.

The protein belongs to the DnaJ family. Homodimer. Requires Zn(2+) as cofactor.

Its subcellular location is the cytoplasm. In terms of biological role, participates actively in the response to hyperosmotic and heat shock by preventing the aggregation of stress-denatured proteins and by disaggregating proteins, also in an autonomous, DnaK-independent fashion. Unfolded proteins bind initially to DnaJ; upon interaction with the DnaJ-bound protein, DnaK hydrolyzes its bound ATP, resulting in the formation of a stable complex. GrpE releases ADP from DnaK; ATP binding to DnaK triggers the release of the substrate protein, thus completing the reaction cycle. Several rounds of ATP-dependent interactions between DnaJ, DnaK and GrpE are required for fully efficient folding. Also involved, together with DnaK and GrpE, in the DNA replication of plasmids through activation of initiation proteins. The sequence is that of Chaperone protein DnaJ from Haloquadratum walsbyi (strain DSM 16790 / HBSQ001).